The primary structure comprises 192 residues: uncharacterized protein (192 aa).

Positions 29-160 (HRQAAVLIPI…PLDIYRRGDS (132 aa)) constitute a Nudix hydrolase domain. The short motif at 67 to 89 (GAVDDTDASVIAAALREAEEEVA) is the Nudix box element. Residues Glu83 and Glu87 each contribute to the Mg(2+) site.

It belongs to the Nudix hydrolase family. PCD1 subfamily. It depends on Mn(2+) as a cofactor. Mg(2+) serves as cofactor.

In terms of biological role, probably mediates the hydrolysis of some nucleoside diphosphate derivatives. This is an uncharacterized protein from Escherichia coli (strain SMS-3-5 / SECEC).